Here is a 209-residue protein sequence, read N- to C-terminus: NAD(P)H dehydrogenase (quinone) (209 aa).

The Flavodoxin-like domain occupies 4-199; that stretch reads VNIIFYSMYG…AMARYQGRHV (196 aa). Residues 10–15 and 87–89 each bind FMN; these read SMYGHV and TRY. NAD(+) is bound at residue Tyr12. Trp107 serves as a coordination point for substrate. FMN is bound by residues 122–128 and His143; that span reads SSGTQHG.

This sequence belongs to the WrbA family. Requires FMN as cofactor.

It carries out the reaction a quinone + NADH + H(+) = a quinol + NAD(+). The enzyme catalyses a quinone + NADPH + H(+) = a quinol + NADP(+). In Methanosarcina acetivorans (strain ATCC 35395 / DSM 2834 / JCM 12185 / C2A), this protein is NAD(P)H dehydrogenase (quinone).